The following is a 152-amino-acid chain: Lipoprotein signal peptidase (152 aa).

3 helical membrane passes run 5–25 (LFVLSLILLVALDQLSKFWIV), 61–81 (WFFVVITVLVIGYAIYYLATH), and 84–104 (LNIWKQLALLLIISGGIGNFI). Residues Asp-114 and Asp-130 contribute to the active site. The chain crosses the membrane as a helical span at residues 125-145 (IFNVADSYLTVGVILLVICLW).

This sequence belongs to the peptidase A8 family.

Its subcellular location is the cell membrane. The catalysed reaction is Release of signal peptides from bacterial membrane prolipoproteins. Hydrolyzes -Xaa-Yaa-Zaa-|-(S,diacylglyceryl)Cys-, in which Xaa is hydrophobic (preferably Leu), and Yaa (Ala or Ser) and Zaa (Gly or Ala) have small, neutral side chains.. Its pathway is protein modification; lipoprotein biosynthesis (signal peptide cleavage). This protein specifically catalyzes the removal of signal peptides from prolipoproteins. The protein is Lipoprotein signal peptidase of Streptococcus pyogenes serotype M2 (strain MGAS10270).